Consider the following 206-residue polypeptide: Hypoxanthine-guanine phosphoribosyltransferase (206 aa).

Residues 110–118 (DEVDDTRTT), K154, and 181–187 (WIMYPWE) contribute to the GMP site. The Proton acceptor role is filled by D114.

Belongs to the purine/pyrimidine phosphoribosyltransferase family. Dimer. The cofactor is Mg(2+).

The protein localises to the endoplasmic reticulum. The catalysed reaction is IMP + diphosphate = hypoxanthine + 5-phospho-alpha-D-ribose 1-diphosphate. The enzyme catalyses GMP + diphosphate = guanine + 5-phospho-alpha-D-ribose 1-diphosphate. Converts guanine to guanosine monophosphate, and hypoxanthine to inosine monophosphate. Transfers the 5-phosphoribosyl group from 5-phosphoribosylpyrophosphate onto the purine. Plays a central role in the generation of purine nucleotides through the purine salvage pathway. The polypeptide is Hypoxanthine-guanine phosphoribosyltransferase (hpt1) (Schizosaccharomyces pombe (strain 972 / ATCC 24843) (Fission yeast)).